The sequence spans 541 residues: Cytochrome P450 monooxygenase claU (541 aa).

Residues 12 to 32 (VIDTLVILFSTWAFLGLIRVI) traverse the membrane as a helical segment. Cys-480 lines the heme pocket.

The protein belongs to the cytochrome P450 family. Heme serves as cofactor.

The protein localises to the membrane. The protein operates within secondary metabolite biosynthesis; terpenoid biosynthesis. Cytochrome P450 monooxygenase; part of the gene cluster that mediates the biosynthesis of clavilactone A, a meroterpenoid that features a unique benzo-fused ten-membered carbocyclic ring unit with an alpha,beta-epoxy-gamma-lactone moiety, forming an intriguing 10/5/3 tricyclic nested skeleton. Cytochrome P450 monooxygenases claO, claP, claQ, claU, and claW are close orthologs, suggesting that a redundant function or pseudogenes are present in the cla cluster. These monoxygenases are not involved in clavilactone A biosynthesis nor its modification. ClaR, ClaS and ClaT are sufficient to produce clavilactone A. The biosynthesis begins with the prenyltransferase claS that transfers geranyl pyrophosphate (GPP) to hydroquinone to produces geranylhydroquinone. The cytochrome P450 monooxygenase claR then catalyzes the diradical coupling reaction between the intramolecular hydroquinone and allyl moieties to form the benzo-fused ten-membered carbocyclic ring unit of wigantol. Finally the cytochrome P450 monooxygenase claT exquisitely and stereoselectively assembles the alpha,beta-epoxy-gamma-lactone moiety, producing clavilactone A via arnebinol A. The sequence is that of Cytochrome P450 monooxygenase claU from Ampulloclitocybe clavipes (Club foot).